A 314-amino-acid chain; its full sequence is MLESKLKAPVFTATTQGDHYGEFVLEPLERGFGVTLGNPLRRILLSSIPGTAVTSVYIEDVLHEFSTIPGVKEDVVEIILNLKELVVRFLDPKMASTTLILRAEGPKEVRAGDFTPSADVEIMNPDLHIATLEEGGKLYMEVRVDRGVGYVPAERHGIKDRINAIPVDAIFSPVRRVAFQVEDTRLGQRTDLDKLTLRIWTDGSVTPLEALNQAVAILKEHLNYFANPEASLLPTPEVSKGEKRESAEEDLDLPLEELGLSTRVLHSLKEEGIESVRALLALNLKDLRNIPGIGERSLEEIRQALAKKGFTLKE.

The tract at residues 1–229 is alpha N-terminal domain (alpha-NTD); it reads MLESKLKAPV…EHLNYFANPE (229 aa). The tract at residues 246–314 is alpha C-terminal domain (alpha-CTD); it reads SAEEDLDLPL…LAKKGFTLKE (69 aa).

Belongs to the RNA polymerase alpha chain family. As to quaternary structure, homodimer. The RNAP catalytic core consists of 2 alpha, 1 beta, 1 beta' and 1 omega subunit. When a sigma factor is associated with the core the holoenzyme is formed, which can initiate transcription.

It carries out the reaction RNA(n) + a ribonucleoside 5'-triphosphate = RNA(n+1) + diphosphate. Its function is as follows. DNA-dependent RNA polymerase catalyzes the transcription of DNA into RNA using the four ribonucleoside triphosphates as substrates. This Thermus aquaticus protein is DNA-directed RNA polymerase subunit alpha (rpoA).